Here is a 2365-residue protein sequence, read N- to C-terminus: Voltage-dependent T-type calcium channel subunit alpha-1H (2365 aa).

The tract at residues 1-63 (MTEGTLAADE…PGTECGADLG (63 aa)) is disordered. Residues 1–100 (MTEGTLAADE…SWCLRLVSRR (100 aa)) are Cytoplasmic-facing. Residues 16 to 36 (GASPSAPAAPVRASPASPGVP) are compositionally biased toward low complexity. Residues 87-422 (TRPRSWCLRL…LCLVVIATQF (336 aa)) form an I repeat. A helical membrane pass occupies residues 101–119 (WFEHISMLVIMLNCVTLGM). Over 120–141 (FRPCEDVECRSERCSILEAFDD) the chain is Extracellular. Asp140 contributes to the Zn(2+) binding site. The chain crosses the membrane as a helical span at residues 142 to 160 (FIFAFFAVEMVIKMVALGL). The Cytoplasmic portion of the chain corresponds to 161–169 (FGQKCYLGD). Residues 170 to 184 (TWNRLDFFIVMAGMM) form a helical membrane-spanning segment. The Extracellular portion of the chain corresponds to 185–193 (EYSLDGHNV). The Zn(2+) site is built by Asp189 and His191. Asn192 carries N-linked (GlcNAc...) asparagine glycosylation. The helical transmembrane segment at 194 to 212 (SLSAIRTVRVLRPLRAINR) threads the bilayer. Residues 213–232 (VPSMRILVTLLLDTLPMLGN) lie on the Cytoplasmic side of the membrane. Residues 233 to 253 (VLLLCFFVFFIFGIVGVQLWA) traverse the membrane as a helical segment. Residues 254–394 (GLLRNRCFLD…YYVMDAHSFY (141 aa)) are Extracellular-facing. N-linked (GlcNAc...) asparagine glycosylation occurs at Asn271. A helical membrane pass occupies residues 395-419 (NFIYFILLIIVGSFFMINLCLVVIA). The Cytoplasmic segment spans residues 420-790 (TQFSETKQRE…SKLRRIVDSK (371 aa)). Disordered regions lie at residues 490–573 (VDPS…SESV), 618–656 (PSGA…SPSP), and 737–761 (GDCR…RWRP). The span at 500–532 (GPRRRPRRAGRRTASVHHLVYHHHHHHHHHYHF) shows a compositional bias: basic residues. A compositionally biased stretch (pro residues) spans 557–566 (PPSPPSPGHG). Positions 621-631 (AVNSKGSTSSR) are enriched in polar residues. The stretch at 776-1015 (WASFSSKLRR…LLVAILVEGF (240 aa)) is one II repeat. Residues 791–811 (YFNRGIMAAILVNTLSMGVEY) form a helical membrane-spanning segment. Residues 812 to 824 (HEQPDELTNALEI) lie on the Extracellular side of the membrane. The helical transmembrane segment at 825–846 (SNIVFTSMFALEMLLKLLACGP) threads the bilayer. The Cytoplasmic segment spans residues 847–852 (LGYIRN). The helical transmembrane segment at 853–871 (PYNIFDGIVVIISVWEIVG) threads the bilayer. Over 872–879 (QADGGLSV) the chain is Extracellular. The helical transmembrane segment at 880–903 (LRTFRLLRVLKLVRFLPALRRQLV) threads the bilayer. The Cytoplasmic portion of the chain corresponds to 904-914 (VLMRTMDNVAT). The chain crosses the membrane as a helical span at residues 915–935 (FCMLLMLFIFIFSILGMHLFG). Over 936 to 987 (CKFSLKTDSGDTVPDRKNFDSLLWAIVTVFQILTQEDWNVVLYNGMASTSSW) the chain is Extracellular. Residues 988–1012 (AALYFVALMTFGNYVLFNLLVAILV) form a helical membrane-spanning segment. Residues 1013–1301 (EGFQAEGDAT…NRLRVSCQKV (289 aa)) are Cytoplasmic-facing. A disordered region spans residues 1059–1215 (PNGHLEGRGS…HRSTMDLCPP (157 aa)). Residues 1130-1147 (GPNSAGSSRRSSWNSLGR) show a composition bias toward low complexity. A compositionally biased stretch (basic and acidic residues) spans 1199–1209 (RRAESLGHRST). The III repeat unit spans residues 1292-1569 (NRLRVSCQKV…MFVGVVVENF (278 aa)). A helical membrane pass occupies residues 1302–1324 (IAHKMFDHVVLVFIFLNCITIAL). Residues 1325–1342 (ERPDIDPGSTERAFLSVS) lie on the Extracellular side of the membrane. A helical transmembrane segment spans residues 1343-1363 (NYIFTAIFVVEMMVKVVALGL). Over 1364-1373 (LWGEHAYLQS) the chain is Cytoplasmic. Residues 1374–1393 (SWNVLDGLLVLVSLVDIIVA) form a helical membrane-spanning segment. The Extracellular segment spans residues 1394 to 1407 (VASAGGAKILGVLR). The chain crosses the membrane as a helical span at residues 1408-1429 (VLRLLRTLRPLRVISRAPGLKL). Over 1430–1439 (VVETLISSLR) the chain is Cytoplasmic. Residues 1440–1463 (PIGNIVLICCAFFIIFGILGVQLF) form a helical membrane-spanning segment. Topologically, residues 1464–1540 (KGKFYYCEGT…DQQPVQNHNP (77 aa)) are extracellular. The N-linked (GlcNAc...) asparagine glycan is linked to Asn1477. A helical transmembrane segment spans residues 1541-1566 (WMLLYFISFLLIVSFFVLNMFVGVVV). At 1567–1627 (ENFHKCRQHQ…RRSIHSLCTS (61 aa)) the chain is on the cytoplasmic side. The stretch at 1613-1874 (DYSHTRRSIH…VVVAVLMKHL (262 aa)) is one IV repeat. The chain crosses the membrane as a helical span at residues 1628 to 1648 (HYLDLFITFIICLNVITMSME). Residues 1649-1662 (HYNQPKSLDEALKY) are Extracellular-facing. The chain crosses the membrane as a helical span at residues 1663 to 1684 (CNYVFTIVFVFEAALKLVAFGF). Topologically, residues 1685–1691 (RRFFKDR) are cytoplasmic. Residues 1692 to 1710 (WNQLDLAIVLLSIMGIALE) form a helical membrane-spanning segment. Residues 1711-1724 (EIEMNAALPINPTI) are Extracellular-facing. The helical transmembrane segment at 1725–1748 (IRIMRVLRIARVLKLLKMATGMRA) threads the bilayer. Residues 1749-1762 (LLDTVVQALPQVGN) are Cytoplasmic-facing. Residues 1763–1783 (LGLLFMLLFFIYAALGVELFG) form a helical membrane-spanning segment. The Extracellular segment spans residues 1784-1846 (RLECSEDNPC…KHCLSYLPAL (63 aa)). A helical membrane pass occupies residues 1847-1874 (SPVYFVTFVLVAQFVLVNVVVAVLMKHL). Residues 1875–2365 (EESNKEARED…APDDSGDEPV (491 aa)) are Cytoplasmic-facing. Composition is skewed to polar residues over residues 1897-1916 (QGST…TEPD) and 1967-1983 (VTSA…SFQV). Disordered stretches follow at residues 1897–1920 (QGST…TPNL), 1967–1999 (VTSA…PLCA), 2053–2264 (APLG…GERW), and 2321–2365 (ELSM…DEPV). Over residues 2092–2102 (DDAEAADPADE) the composition is skewed to acidic residues. Residues 2172–2187 (GDGHLESGEVRARASE) are compositionally biased toward basic and acidic residues.

The protein belongs to the calcium channel alpha-1 subunit (TC 1.A.1.11) family. CACNA1H subfamily. In terms of assembly, interacts (via N-terminal cytoplasmic domain) with STAC. In terms of processing, in response to raising of intracellular calcium, the T-type channels are activated by CaM-kinase II. In terms of tissue distribution, is highly expressed in lumbosacral and thoracolumbar dorsal root ganglion neurons.

It localises to the cell membrane. The catalysed reaction is Ca(2+)(in) = Ca(2+)(out). Its function is as follows. Voltage-sensitive calcium channel that gives rise to T-type calcium currents. T-type calcium channels belong to the 'low-voltage activated (LVA)' group. A particularity of this type of channel is an opening at quite negative potentials, and a voltage-dependent inactivation. T-type channels serve pacemaking functions in both central neurons and cardiac nodal cells and support calcium signaling in secretory cells and vascular smooth muscle. They may also be involved in the modulation of firing patterns of neurons. In the adrenal zona glomerulosa, participates in the signaling pathway leading to aldosterone production in response to either AGT/angiotensin II, or hyperkalemia. The polypeptide is Voltage-dependent T-type calcium channel subunit alpha-1H (Cacna1h) (Mus musculus (Mouse)).